A 171-amino-acid chain; its full sequence is Peptide methionine sulfoxide reductase MsrA (171 aa).

C13 is an active-site residue.

It belongs to the MsrA Met sulfoxide reductase family.

It carries out the reaction L-methionyl-[protein] + [thioredoxin]-disulfide + H2O = L-methionyl-(S)-S-oxide-[protein] + [thioredoxin]-dithiol. The catalysed reaction is [thioredoxin]-disulfide + L-methionine + H2O = L-methionine (S)-S-oxide + [thioredoxin]-dithiol. In terms of biological role, has an important function as a repair enzyme for proteins that have been inactivated by oxidation. Catalyzes the reversible oxidation-reduction of methionine sulfoxide in proteins to methionine. In Mycobacterium sp. (strain MCS), this protein is Peptide methionine sulfoxide reductase MsrA.